A 346-amino-acid chain; its full sequence is Probable RNA methyltransferase PA1839 (346 aa).

Catalysis depends on E91, which acts as the Proton acceptor. Residues 94 to 320 (LLPRGGLCVS…TKVRNSAGQD (227 aa)) form the Radical SAM core domain. C101 and C325 are joined by a disulfide. The [4Fe-4S] cluster site is built by C108, C112, and C115. Residues 153-154 (GE), S183, 206-208 (SLH), and N282 contribute to the S-adenosyl-L-methionine site. C325 functions as the S-methylcysteine intermediate in the catalytic mechanism.

Belongs to the radical SAM superfamily. RlmN family. It depends on [4Fe-4S] cluster as a cofactor.

It localises to the cytoplasm. The protein is Probable RNA methyltransferase PA1839 of Pseudomonas aeruginosa (strain ATCC 15692 / DSM 22644 / CIP 104116 / JCM 14847 / LMG 12228 / 1C / PRS 101 / PAO1).